The primary structure comprises 357 residues: Histidinol-phosphate aminotransferase (357 aa).

The residue at position 218 (K218) is an N6-(pyridoxal phosphate)lysine.

This sequence belongs to the class-II pyridoxal-phosphate-dependent aminotransferase family. Histidinol-phosphate aminotransferase subfamily. As to quaternary structure, homodimer. Pyridoxal 5'-phosphate is required as a cofactor.

The catalysed reaction is L-histidinol phosphate + 2-oxoglutarate = 3-(imidazol-4-yl)-2-oxopropyl phosphate + L-glutamate. It participates in amino-acid biosynthesis; L-histidine biosynthesis; L-histidine from 5-phospho-alpha-D-ribose 1-diphosphate: step 7/9. The sequence is that of Histidinol-phosphate aminotransferase from Prosthecochloris aestuarii (strain DSM 271 / SK 413).